The primary structure comprises 207 residues: MRPSRPSSGKNDLFRDRLDAIINPRQALVRLAGVIPWARFDEAFGGFYRPVGRPANATRLMVGLHYLKHVHDLSDEEVVERWVENPYWQFFCGFEFFQHEAPIDASTMTPWRKRIGPQGLEELLKASVEAALQTGTARPESLERVNVDTTVQPKAIAHPTDSRLYLKALQMLVRHAKKHGIELRQSYTRLAKRAAVRARRYAHARQF.

This is an uncharacterized protein from Rhizobium meliloti (Ensifer meliloti).